Consider the following 376-residue polypeptide: Chorismate synthase ARO2 (376 aa).

S2 is subject to N-acetylserine. The active site involves H17. Positions 39–61 are disordered; the sequence is IQPQLTRRRPGQSKLSTPRDEKD. Catalysis depends on residues H104 and D339.

It belongs to the chorismate synthase family. Homotetramer.

The enzyme catalyses 5-O-(1-carboxyvinyl)-3-phosphoshikimate = chorismate + phosphate. The catalysed reaction is FMNH2 + NADP(+) = FMN + NADPH + 2 H(+). It functions in the pathway metabolic intermediate biosynthesis; chorismate biosynthesis; chorismate from D-erythrose 4-phosphate and phosphoenolpyruvate: step 7/7. Functionally, bifunctional chorismate synthase and flavin reductase that catalyzes the conversion of 5-enolpyruvylshikimate 3-phosphate (EPSP) to form chorismate, which is the last common intermediate in the synthesis of the three aromatic amino acids phenylalanine, tyrosine and tryptophan. Also acts as a flavin reductase (FR) able to generate reduced flavin mononucleotide in the presence of NADPH. The chain is Chorismate synthase ARO2 from Saccharomyces cerevisiae (strain ATCC 204508 / S288c) (Baker's yeast).